The following is a 202-amino-acid chain: MDNALPEPEPLIALIEALRRLPGVGARSARRMAYHLLQHDVQGADMLGRALAGAVQNLRRCARCNSFTEDDVCVICANPKRDASLLCIVETPADQNVIESSHGYRGLYYVLMGRLAPLEGVGPRELDFQRVLDRAADGLVQEVILATNFTAEGETTAHFLGEALAERGLKVTRLARGVPAGSELEYVDAGTIAWALMERRAT.

Residues Cys-61–Cys-76 form a C4-type zinc finger. The region spanning Ser-84 to Pro-179 is the Toprim domain.

It belongs to the RecR family.

Functionally, may play a role in DNA repair. It seems to be involved in an RecBC-independent recombinational process of DNA repair. It may act with RecF and RecO. This Bordetella avium (strain 197N) protein is Recombination protein RecR.